A 460-amino-acid polypeptide reads, in one-letter code: DNA repair protein RadA (460 aa).

The segment at 11 to 28 (CNECGADYPRWQGQCSAC) adopts a C4-type zinc-finger fold. 102-109 (GNPGAGKS) is an ATP binding site. The RadA KNRFG motif motif lies at 258–262 (KNRFG). The segment at 357 to 460 (DVFVNVVGGV…SDALSVFDDL (104 aa)) is lon-protease-like.

Belongs to the RecA family. RadA subfamily.

Its function is as follows. DNA-dependent ATPase involved in processing of recombination intermediates, plays a role in repairing DNA breaks. Stimulates the branch migration of RecA-mediated strand transfer reactions, allowing the 3' invading strand to extend heteroduplex DNA faster. Binds ssDNA in the presence of ADP but not other nucleotides, has ATPase activity that is stimulated by ssDNA and various branched DNA structures, but inhibited by SSB. Does not have RecA's homology-searching function. Genetic experiments involving combination of radA mutations with mutations in recA, recB, recG, recJ, recQ, ruvA and ruvC show it plays a role in recombination and recombinational repair, probably involving stabilizing or processing branched DNA or blocked replication forks. Is genetically synergistic to RecG and RuvABC. May be involved in recovery of genetic rearrangements during replication fork breakdown. In combination with RadD is important in recovery from double-strand DNA breaks (DSB). In Escherichia coli (strain K12), this protein is DNA repair protein RadA.